The sequence spans 296 residues: GTPase Era (296 aa).

In terms of domain architecture, Era-type G spans 3–170 (KSGFVTIVGR…KELMFKYIPE (168 aa)). The interval 11-18 (GRPNVGKS) is G1. Residue 11–18 (GRPNVGKS) participates in GTP binding. The tract at residues 37-41 (QTTRN) is G2. The tract at residues 58 to 61 (DTPG) is G3. GTP is bound by residues 58-62 (DTPGI) and 120-123 (NKID). The segment at 120–123 (NKID) is G4. Residues 149 to 151 (ISA) form a G5 region. One can recognise a KH type-2 domain in the interval 201 to 278 (LSEEVPHGIA…YIRLWVKVKE (78 aa)).

It belongs to the TRAFAC class TrmE-Era-EngA-EngB-Septin-like GTPase superfamily. Era GTPase family. As to quaternary structure, monomer.

The protein localises to the cytoplasm. Its subcellular location is the cell membrane. Its function is as follows. An essential GTPase that binds both GDP and GTP, with rapid nucleotide exchange. Plays a role in 16S rRNA processing and 30S ribosomal subunit biogenesis and possibly also in cell cycle regulation and energy metabolism. This is GTPase Era from Clostridium botulinum (strain Loch Maree / Type A3).